The primary structure comprises 165 residues: E3 ubiquitin ligase complex SCF subunit sconC (165 aa).

Residues 106 to 165 (ILAANYLDIKALLDVGCKTVANMIKGKSPEEIRKTFNIQNDFTPEEEDQIRRENEWAEDR) form an interaction with the F-box domain of F-box proteins region.

Belongs to the SKP1 family. In terms of assembly, component of the SCF (SKP1-CUL1-F-box protein) E3 ubiquitin ligase complexes.

The protein operates within protein modification; protein ubiquitination. Essential component of the SCF (SKP1-CUL1-F-box protein) E3 ubiquitin ligase complexes, which mediate the ubiquitination and subsequent proteasomal degradation of target proteins. Controls sulfur metabolite repression, probably by mediating the inactivation or degradation of the metR transcription factor. The polypeptide is E3 ubiquitin ligase complex SCF subunit sconC (sconC) (Arthroderma otae (strain ATCC MYA-4605 / CBS 113480) (Microsporum canis)).